The primary structure comprises 358 residues: Uroporphyrinogen decarboxylase (358 aa).

Substrate is bound by residues 29–33 (RQAGR), aspartate 79, tyrosine 155, serine 210, and histidine 330.

This sequence belongs to the uroporphyrinogen decarboxylase family. Homodimer.

It is found in the cytoplasm. It catalyses the reaction uroporphyrinogen III + 4 H(+) = coproporphyrinogen III + 4 CO2. It participates in porphyrin-containing compound metabolism; protoporphyrin-IX biosynthesis; coproporphyrinogen-III from 5-aminolevulinate: step 4/4. Catalyzes the decarboxylation of four acetate groups of uroporphyrinogen-III to yield coproporphyrinogen-III. The sequence is that of Uroporphyrinogen decarboxylase from Bordetella petrii (strain ATCC BAA-461 / DSM 12804 / CCUG 43448).